The sequence spans 104 residues: Large ribosomal subunit protein uL24 (104 aa).

This sequence belongs to the universal ribosomal protein uL24 family. In terms of assembly, part of the 50S ribosomal subunit.

One of two assembly initiator proteins, it binds directly to the 5'-end of the 23S rRNA, where it nucleates assembly of the 50S subunit. Functionally, one of the proteins that surrounds the polypeptide exit tunnel on the outside of the subunit. This Pseudomonas syringae pv. syringae (strain B728a) protein is Large ribosomal subunit protein uL24.